The sequence spans 592 residues: Potassium-transporting ATPase potassium-binding subunit (592 aa).

11 helical membrane-spanning segments follow: residues 7–27 (LQTV…GTFM), 71–91 (VLFN…QHLL), 136–156 (GLTV…IAVI), 179–199 (LYIL…QGVI), 287–307 (LEIL…GAMV), 314–334 (WTLL…LQGV), 411–431 (GLYT…LMIG), 449–469 (SVVT…IAMI), 473–493 (AVAA…YAFA), 515–535 (ILGA…VLAM), and 559–579 (FALW…FPAL).

This sequence belongs to the KdpA family. The system is composed of three essential subunits: KdpA, KdpB and KdpC.

The protein localises to the cell inner membrane. In terms of biological role, part of the high-affinity ATP-driven potassium transport (or Kdp) system, which catalyzes the hydrolysis of ATP coupled with the electrogenic transport of potassium into the cytoplasm. This subunit binds the periplasmic potassium ions and delivers the ions to the membrane domain of KdpB through an intramembrane tunnel. The chain is Potassium-transporting ATPase potassium-binding subunit from Geobacter sulfurreducens (strain ATCC 51573 / DSM 12127 / PCA).